The sequence spans 378 residues: Spermidine/putrescine import ATP-binding protein PotA (378 aa).

The ABC transporter domain occupies 18-248; that stretch reads VLLSGISKSF…PKNLFVAGFI (231 aa). An ATP-binding site is contributed by 50–57; that stretch reads GPSGCGKT.

The protein belongs to the ABC transporter superfamily. Spermidine/putrescine importer (TC 3.A.1.11.1) family. In terms of assembly, the complex is composed of two ATP-binding proteins (PotA), two transmembrane proteins (PotB and PotC) and a solute-binding protein (PotD).

The protein resides in the cell inner membrane. It catalyses the reaction ATP + H2O + polyamine-[polyamine-binding protein]Side 1 = ADP + phosphate + polyamineSide 2 + [polyamine-binding protein]Side 1.. Its function is as follows. Part of the ABC transporter complex PotABCD involved in spermidine/putrescine import. Responsible for energy coupling to the transport system. The chain is Spermidine/putrescine import ATP-binding protein PotA from Salmonella typhi.